Here is a 202-residue protein sequence, read N- to C-terminus: Nucleoside triphosphate pyrophosphatase (202 aa).

Catalysis depends on Asp-79, which acts as the Proton acceptor.

This sequence belongs to the Maf family. A divalent metal cation is required as a cofactor.

The protein localises to the cytoplasm. It carries out the reaction a ribonucleoside 5'-triphosphate + H2O = a ribonucleoside 5'-phosphate + diphosphate + H(+). The enzyme catalyses a 2'-deoxyribonucleoside 5'-triphosphate + H2O = a 2'-deoxyribonucleoside 5'-phosphate + diphosphate + H(+). Its function is as follows. Nucleoside triphosphate pyrophosphatase. May have a dual role in cell division arrest and in preventing the incorporation of modified nucleotides into cellular nucleic acids. The protein is Nucleoside triphosphate pyrophosphatase of Rhodospirillum rubrum (strain ATCC 11170 / ATH 1.1.1 / DSM 467 / LMG 4362 / NCIMB 8255 / S1).